We begin with the raw amino-acid sequence, 522 residues long: Putative cysteine ligase BshC (522 aa).

Residues 436–469 (SWAQAEKAKALKQLEDIEKKLRKAEERKHDDVIK) adopt a coiled-coil conformation.

Belongs to the BshC family.

This Cytophaga hutchinsonii (strain ATCC 33406 / DSM 1761 / CIP 103989 / NBRC 15051 / NCIMB 9469 / D465) protein is Putative cysteine ligase BshC.